A 350-amino-acid chain; its full sequence is MRVSDFDFDLPEELIALRPARPRDSARMLVIGPAENALADKSVSDLPSHLREGDILVFNDTKVIPARLFGTRRRGEASARIEVMLHKRESADEWRAFLRPAKKLNLSETIDFPGGLSAAVEEKGEGGEAGLRFSLSGPALDAAIAAAGEMPLPPYIARKRAADDEDVADYQTLHADEPGAVAAPTAGLHFTPALMAAIEARGVSTVRLTLHVGAGTFLPVTAEDTDTHKMHAERGEITEAEAAAINEARAKGGRIVAVGTTSLRLLESAVDEAGTVHPFRGETDIFITPGYRFRAVDVLMTNFHLPRSTLFMLVSALRSTEEMKRAYAHAVAEKYRFYSYGDACLIYGAS.

The protein belongs to the QueA family. In terms of assembly, monomer.

The protein localises to the cytoplasm. The enzyme catalyses 7-aminomethyl-7-carbaguanosine(34) in tRNA + S-adenosyl-L-methionine = epoxyqueuosine(34) in tRNA + adenine + L-methionine + 2 H(+). The protein operates within tRNA modification; tRNA-queuosine biosynthesis. In terms of biological role, transfers and isomerizes the ribose moiety from AdoMet to the 7-aminomethyl group of 7-deazaguanine (preQ1-tRNA) to give epoxyqueuosine (oQ-tRNA). The sequence is that of S-adenosylmethionine:tRNA ribosyltransferase-isomerase from Parvibaculum lavamentivorans (strain DS-1 / DSM 13023 / NCIMB 13966).